Reading from the N-terminus, the 1029-residue chain is Serine/threonine-protein kinase KSP1 (1029 aa).

The 334-residue stretch at 18–351 folds into the Protein kinase domain; the sequence is YQKIEDISEG…TELQNLSEYT (334 aa). Residues 27-35 and lysine 47 each bind ATP; that span reads GSYGYVSLA. The span at 56–79 shows a compositional bias: acidic residues; sequence GQYDGPQDDENDCDSSDCDDDEDT. Residues 56 to 105 form a disordered region; that stretch reads GQYDGPQDDENDCDSSDCDDDEDTKVDTDRHENENGNASSNNGSSREKKH. A compositionally biased stretch (basic and acidic residues) spans 80–89; the sequence is KVDTDRHENE. The segment covering 90 to 99 has biased composition (low complexity); the sequence is NGNASSNNGS. Catalysis depends on aspartate 207, which acts as the Proton acceptor. A disordered region spans residues 377-397; it reads VPPSSAPVSLPTPISSSNKQH. A phosphoserine mark is found at serine 416 and serine 419. 3 positions are modified to phosphothreonine: threonine 501, threonine 504, and threonine 526. Phosphoserine is present on serine 529. Residues 532–570 are disordered; sequence HRYMEGFSNNNNKQYRQNRNYNNNNNNSNNNHGSNYNNF. The segment covering 538–570 has biased composition (low complexity); sequence FSNNNNKQYRQNRNYNNNNNNSNNNHGSNYNNF. Phosphoserine is present on serine 646. A disordered region spans residues 732 to 824; that stretch reads STNHNNNGNN…SDSKELEQER (93 aa). Over residues 734–743 the composition is skewed to low complexity; the sequence is NHNNNGNNNH. The span at 744 to 754 shows a compositional bias: polar residues; the sequence is IDTNSTTNQYH. Over residues 813–824 the composition is skewed to basic and acidic residues; that stretch reads HSSDSKELEQER. 2 positions are modified to phosphoserine: serine 845 and serine 884. The disordered stretch occupies residues 949 to 978; sequence EYEGESDKMAHGKMEGGDNESSSTSPDERQ. Basic and acidic residues predominate over residues 953–964; the sequence is ESDKMAHGKMEG. Threonine 1005 carries the post-translational modification Phosphothreonine. Serine 1014 bears the Phosphoserine mark.

This sequence belongs to the protein kinase superfamily. Ser/Thr protein kinase family. CK2 subfamily. Post-translationally, phosphorylated by PKA in a TORC1-dependent manner. Phosphorylation at PKA consensus sites RRxS/T decreases upon rapamycin treatment.

The protein localises to the nucleus. The enzyme catalyses L-seryl-[protein] + ATP = O-phospho-L-seryl-[protein] + ADP + H(+). It carries out the reaction L-threonyl-[protein] + ATP = O-phospho-L-threonyl-[protein] + ADP + H(+). May act on PRP20. The protein is Serine/threonine-protein kinase KSP1 (KSP1) of Saccharomyces cerevisiae (strain ATCC 204508 / S288c) (Baker's yeast).